Here is a 286-residue protein sequence, read N- to C-terminus: Pantothenate synthetase (286 aa).

Residue 31–38 (MGALHDGH) participates in ATP binding. H38 serves as the catalytic Proton donor. Q62 is a (R)-pantoate binding site. Residue Q62 participates in beta-alanine binding. 148–151 (GKKD) is a binding site for ATP. Q154 serves as a coordination point for (R)-pantoate. Residues V177 and 185 to 188 (KSSR) each bind ATP.

The protein belongs to the pantothenate synthetase family. As to quaternary structure, homodimer.

Its subcellular location is the cytoplasm. It carries out the reaction (R)-pantoate + beta-alanine + ATP = (R)-pantothenate + AMP + diphosphate + H(+). It participates in cofactor biosynthesis; (R)-pantothenate biosynthesis; (R)-pantothenate from (R)-pantoate and beta-alanine: step 1/1. Its function is as follows. Catalyzes the condensation of pantoate with beta-alanine in an ATP-dependent reaction via a pantoyl-adenylate intermediate. This is Pantothenate synthetase from Staphylococcus carnosus (strain TM300).